An 805-amino-acid polypeptide reads, in one-letter code: Transcription factor E2f1 (805 aa).

Disordered regions lie at residues 9 to 45 (APINNSNSSSSHTTTSSNTQRHQQHQQHYGGSGTTGH), 119 to 208 (AAAA…LRHD), and 224 to 255 (PASHHPFSLSTPQQQLAASVASSSSSGDRNRA). 2 stretches are compositionally biased toward low complexity: residues 12 to 37 (NNSNSSSSHTTTSSNTQRHQQHQQHY) and 119 to 134 (AAAAATAGHTQQQLQQ). 2 stretches are compositionally biased toward polar residues: residues 144–154 (RKATGKSNDIT) and 181–195 (HHQTVYQKHTASSAP). Positions 147–161 (TGKSNDITNYYKVKR) match the PIP-box K+4 motif motif. A compositionally biased stretch (low complexity) spans 240 to 249 (AASVASSSSS). The DNA-binding element occupies 253 to 318 (NRADTSLGIL…KKSKNNIQWR (66 aa)). Residues 318 to 411 (RCGQSMVSQE…LPNTKLPREI (94 aa)) form a dimerization region. S434 is modified (phosphoserine). Disordered regions lie at residues 578 to 650 (SLTE…QRRS) and 714 to 743 (GAGANADPHQPYSHDRNSLPPGVADCDANS). 2 stretches are compositionally biased toward low complexity: residues 595–615 (AAAAIAAGSSTTATTTLNSHN) and 623–636 (SNHSNHSSSNNSKS). The segment covering 637–647 (QPPTIGYGSSQ) has biased composition (polar residues).

Belongs to the E2F/DP family. In terms of assembly, heterodimer of E2f and Dp. Cooperates to give sequence-specific DNA binding and optimal trans-activation. Interacts with PCNA. Ubiquitinated by the DCX(DTL) complex, also named CRL4(CDT2) complex, leading to its degradation during S phase. Ubiquitination by the DCX(DTL) complex is essential for cell cycle control and is PCNA-dependent: interacts with PCNA via its PIP-box, while the presence of the containing the 'K+4' motif in the PIP box, recruit the DCX(DTL) complex, leading to its degradation. As to expression, segmentally repeated expression throughout early embryos is restricted to the ventral nerve cord in later embryos.

Its subcellular location is the nucleus. Functionally, transcriptional activator that binds to E2f sites. Required for wild-type growth in mitotic and polytene tissues, Contributes to the expression of replication genes at the G1-S transition and Cyclin E. Activates cell proliferation in wing imaginal disk, which requires expression of vg. This Drosophila melanogaster (Fruit fly) protein is Transcription factor E2f1.